Consider the following 167-residue polypeptide: E1B protein, small T-antigen (167 aa).

Positions 143 to 167 are disordered; sequence GLDPVQEEEEEEENLRAGLDPSTEL.

It belongs to the adenoviridae E1B 19 kDa protein family.

The protein localises to the host cell membrane. Its subcellular location is the host nucleus envelope. It is found in the host nucleus lamina. Functionally, putative adenovirus Bcl-2 homolog that inhibits apoptosis induced by TNF or FAS pathways, as well as p53-mediated apoptosis. Without E1B 19K function, virus production is compromised because of premature death of host cell. Interacts with Bax protein in cell lysates. In Human adenovirus F serotype 40 (HAdV-40), this protein is E1B protein, small T-antigen.